Reading from the N-terminus, the 114-residue chain is Large ribosomal subunit protein uL18 (114 aa).

This sequence belongs to the universal ribosomal protein uL18 family. As to quaternary structure, part of the 50S ribosomal subunit; part of the 5S rRNA/L5/L18/L25 subcomplex. Contacts the 5S and 23S rRNAs.

Its function is as follows. This is one of the proteins that bind and probably mediate the attachment of the 5S RNA into the large ribosomal subunit, where it forms part of the central protuberance. This chain is Large ribosomal subunit protein uL18, found in Parabacteroides distasonis (strain ATCC 8503 / DSM 20701 / CIP 104284 / JCM 5825 / NCTC 11152).